We begin with the raw amino-acid sequence, 87 residues long: UPF0250 protein KPN78578_06520 (87 aa).

Belongs to the UPF0250 family.

This chain is UPF0250 protein KPN78578_06520, found in Klebsiella pneumoniae subsp. pneumoniae (strain ATCC 700721 / MGH 78578).